A 177-amino-acid polypeptide reads, in one-letter code: Large ribosomal subunit protein uL6 (177 aa).

This sequence belongs to the universal ribosomal protein uL6 family. As to quaternary structure, part of the 50S ribosomal subunit.

Functionally, this protein binds to the 23S rRNA, and is important in its secondary structure. It is located near the subunit interface in the base of the L7/L12 stalk, and near the tRNA binding site of the peptidyltransferase center. The chain is Large ribosomal subunit protein uL6 from Pseudoalteromonas atlantica (strain T6c / ATCC BAA-1087).